The primary structure comprises 471 residues: Regulator of microtubule dynamics protein 3 (471 aa).

The Mitochondrial intermembrane segment spans residues 1–12 (MSRLGALGGSRA). The helical transmembrane segment at 13–35 (GLGLLLGTAAGLGFLCVLYSQRW) threads the bilayer. Residues 36–471 (KRTQRHGRSQ…LEELEVILGK (436 aa)) lie on the Cytoplasmic side of the membrane. S44, S46, S50, and S57 each carry phosphoserine. Positions 91–125 (LDRLDFVLTSLMALRREVEELQRSLQGLAGEIVGE) form a coiled coil. The FFAT motif lies at 157-163 (VYFTASS). Residue T160 is modified to Phosphothreonine. The interval 168–203 (TDAESEGGYTTANAESDYERDSDKESEDAEDEVSCE) is disordered. 4 positions are modified to phosphoserine: S183, S193, S212, and S233. The segment covering 191–201 (KESEDAEDEVS) has biased composition (acidic residues).

The protein belongs to the RMDN family. Interacts with PTPN2. Interacts with microtubules. Interacts with VAPB. Interacts (via FFAT motif) with MOSPD2 (via MSP domain). Interacts (via phosphorylated FFAT motif) with MOSPD2, VAPA and VAPB. Phosphorylation at Thr-160 of the FFAT motif activates interaction with MOSPD2, VAPA and VAPB.

It is found in the mitochondrion outer membrane. The protein localises to the cytoplasm. The protein resides in the nucleus. It localises to the cytoskeleton. Its subcellular location is the spindle. It is found in the spindle pole. Functionally, involved in cellular calcium homeostasis regulation. May participate in differentiation and apoptosis of keratinocytes. Overexpression induces apoptosis. This Rattus norvegicus (Rat) protein is Regulator of microtubule dynamics protein 3.